The primary structure comprises 943 residues: Protein translocase subunit SecA (943 aa).

Residues Gln-90, 108 to 112 (GEGKT), and Asp-509 each bind ATP. The segment at 534–576 (KPDNEHKPPIPQQRSSKAGGGFASKSESISNKNSKSSGASLFP) is disordered. The segment covering 556–570 (ASKSESISNKNSKSS) has biased composition (low complexity).

It belongs to the SecA family. In terms of assembly, monomer and homodimer. Part of the essential Sec protein translocation apparatus which comprises SecA, SecYEG and auxiliary proteins SecDF. Other proteins may also be involved.

Its subcellular location is the cell inner membrane. It is found in the cellular thylakoid membrane. The protein resides in the cytoplasm. The catalysed reaction is ATP + H2O + cellular proteinSide 1 = ADP + phosphate + cellular proteinSide 2.. Part of the Sec protein translocase complex. Interacts with the SecYEG preprotein conducting channel. Has a central role in coupling the hydrolysis of ATP to the transfer of proteins into and across the cell membrane, serving as an ATP-driven molecular motor driving the stepwise translocation of polypeptide chains across the membrane. In terms of biological role, probably participates in protein translocation into and across both the cytoplasmic and thylakoid membranes in cyanobacterial cells. This chain is Protein translocase subunit SecA, found in Prochlorococcus marinus (strain MIT 9515).